We begin with the raw amino-acid sequence, 336 residues long: Plant-specific TFIIB-related protein 2 (336 aa).

The TFIIB-type zinc finger occupies 2–34 (EEETCLDCKRPTIMVVDHSSGDTICSECGLVLE). Zn(2+) contacts are provided by C6, C9, C26, and C29.

Specifically expressed in reproductive organs and seeds.

It localises to the nucleus. Its function is as follows. Plant-specific TFIIB-related protein involved in the regulation of endosperm proliferation during the syncytial phase of endosperm development. Does not contribute to RNA polymerase IV or V activities in reproductive tissues. The chain is Plant-specific TFIIB-related protein 2 from Arabidopsis thaliana (Mouse-ear cress).